A 326-amino-acid polypeptide reads, in one-letter code: tRNA dimethylallyltransferase (326 aa).

10–17 (GPTGTGKT) serves as a coordination point for ATP. 12–17 (TGTGKT) is a binding site for substrate. Residues 35–38 (DSMQ) form an interaction with substrate tRNA region.

Belongs to the IPP transferase family. Monomer. Mg(2+) serves as cofactor.

The catalysed reaction is adenosine(37) in tRNA + dimethylallyl diphosphate = N(6)-dimethylallyladenosine(37) in tRNA + diphosphate. In terms of biological role, catalyzes the transfer of a dimethylallyl group onto the adenine at position 37 in tRNAs that read codons beginning with uridine, leading to the formation of N6-(dimethylallyl)adenosine (i(6)A). The chain is tRNA dimethylallyltransferase from Dictyoglomus turgidum (strain DSM 6724 / Z-1310).